We begin with the raw amino-acid sequence, 158 residues long: Interleukin-17A (158 aa).

The N-terminal stretch at 1 to 25 (MSPGRASSVSLMLLLLLSLAATVKA) is a signal peptide. Asparagine 71 carries N-linked (GlcNAc...) asparagine glycosylation. 2 disulfide bridges follow: cysteine 97-cysteine 147 and cysteine 102-cysteine 149.

This sequence belongs to the IL-17 family. As to quaternary structure, homodimer. Forms complexes with IL17RA and IL17RC receptors with 2:1 binding stoichiometry: two receptor chains for one interleukin molecule. IL17A homodimer preferentially drives the formation of IL17RA-IL17RC heterodimeric receptor complex. IL17A homodimer adopts an asymmetrical ternary structure with one IL17RA molecule, allowing for high affinity interactions of one IL17A monomer with one IL17RA molecule (via D1 and D2 domains), while disfavoring binding of a second IL17RA molecule on the other IL17A monomer. Heterodimer with IL17F. IL17A-IL17F forms complexes with IL17RA-IL17RC, but with lower affinity when compared to IL17A homodimer. IL17RA and IL17RC chains cannot distinguish between IL17A and IL17F molecules, potentially enabling the formation of topologically distinct complexes. As to expression, expressed by Th17 cell lineage (at protein level). The expression pattern reflects the differentiation state, with IL17A-IL17F heterodimers produced at higher levels than IL17A-IL17A and IL17F-IL17F dimers in fully differentiated Th17 cells. Expressed in innate lymphoid cells (at protein level). Expressed in gamma-delta T cell subsets (at protein level). Expressed in iNKT cells (at protein level).

The protein resides in the secreted. Its function is as follows. Effector cytokine of innate and adaptive immune system involved in antimicrobial host defense and maintenance of tissue integrity. Signals via IL17RA-IL17RC heterodimeric receptor complex, triggering homotypic interaction of IL17RA and IL17RC chains with TRAF3IP2 adapter. This leads to downstream TRAF6-mediated activation of NF-kappa-B and MAPkinase pathways ultimately resulting in transcriptional activation of cytokines, chemokines, antimicrobial peptides and matrix metalloproteinases, with potential strong immune inflammation. Plays an important role in connecting T cell-mediated adaptive immunity and acute inflammatory response to destroy extracellular bacteria and fungi. As a signature effector cytokine of T-helper 17 cells (Th17), primarily induces neutrophil activation and recruitment at infection and inflammatory sites. In airway epithelium, mediates neutrophil chemotaxis via induction of CXCL1 and CXCL5 chemokines. In secondary lymphoid organs, contributes to germinal center formation by regulating the chemotactic response of B cells to CXCL12 and CXCL13, enhancing retention of B cells within the germinal centers, B cell somatic hypermutation rate and selection toward plasma cells. Effector cytokine of a subset of gamma-delta T cells that functions as part of an inflammatory circuit downstream IL1B, TLR2 and IL23A-IL12B to promote neutrophil recruitment for efficient bacterial clearance. Effector cytokine of innate immune cells including invariant natural killer cell (iNKT) and group 3 innate lymphoid cells that mediate initial neutrophilic inflammation. Involved in the maintenance of the integrity of epithelial barriers during homeostasis and pathogen infection. Upon acute injury, has a direct role in epithelial barrier formation by regulating OCLN localization and tight junction biogenesis. As part of the mucosal immune response induced by commensal bacteria, enhances host's ability to resist pathogenic bacterial and fungal infections by promoting neutrophil recruitment and antimicrobial peptides release. In synergy with IL17F, mediates the production of antimicrobial beta-defensins DEFB1, DEFB103A, and DEFB104A by mucosal epithelial cells, limiting the entry of microbes through the epithelial barriers. Involved in antiviral host defense through various mechanisms. Enhances immunity against West Nile virus by promoting T cell cytotoxicity. May play a beneficial role in influenza A virus (H5N1) infection by enhancing B cell recruitment and immune response in the lung. Contributes to influenza A virus (H1N1) clearance by driving the differentiation of B-1a B cells, providing for production of virus-specific IgM antibodies at first line of host defense. In Mus musculus (Mouse), this protein is Interleukin-17A (Il17a).